Reading from the N-terminus, the 334-residue chain is 6-phosphogluconolactonase (334 aa).

The protein belongs to the cycloisomerase 2 family.

It catalyses the reaction 6-phospho-D-glucono-1,5-lactone + H2O = 6-phospho-D-gluconate + H(+). It functions in the pathway carbohydrate degradation; pentose phosphate pathway; D-ribulose 5-phosphate from D-glucose 6-phosphate (oxidative stage): step 2/3. Catalyzes the hydrolysis of 6-phosphogluconolactone to 6-phosphogluconate. The protein is 6-phosphogluconolactonase of Buchnera aphidicola subsp. Acyrthosiphon pisum (strain 5A).